A 143-amino-acid chain; its full sequence is Phosphatidylethanolamine-binding protein homolog R644 (143 aa).

The protein belongs to the phosphatidylethanolamine-binding protein family.

It localises to the virion. This is Phosphatidylethanolamine-binding protein homolog R644 from Acanthamoeba polyphaga mimivirus (APMV).